Here is a 373-residue protein sequence, read N- to C-terminus: tRNA-specific 2-thiouridylase MnmA (373 aa).

ATP is bound by residues 12–19 (GMSGGVDS) and M38. The tract at residues 98 to 100 (NPD) is interaction with target base in tRNA. C103 serves as the catalytic Nucleophile. Residues C103 and C200 are joined by a disulfide bond. G127 contacts ATP. Residues 150–152 (KDQ) form an interaction with tRNA region. C200 functions as the Cysteine persulfide intermediate in the catalytic mechanism. Residues 312–313 (RY) are interaction with tRNA.

This sequence belongs to the MnmA/TRMU family.

It localises to the cytoplasm. It catalyses the reaction S-sulfanyl-L-cysteinyl-[protein] + uridine(34) in tRNA + AH2 + ATP = 2-thiouridine(34) in tRNA + L-cysteinyl-[protein] + A + AMP + diphosphate + H(+). Catalyzes the 2-thiolation of uridine at the wobble position (U34) of tRNA, leading to the formation of s(2)U34. In Streptococcus pyogenes serotype M3 (strain SSI-1), this protein is tRNA-specific 2-thiouridylase MnmA.